Reading from the N-terminus, the 385-residue chain is Nuclear hormone receptor family member nhr-68 (385 aa).

Residues 4–79 (KEVCLVCQDF…VGMDKTSLQA (76 aa)) constitute a DNA-binding region (nuclear receptor). NR C4-type zinc fingers lie at residues 7-27 (CLVC…CNGC) and 43-62 (CQFD…CRFC). The disordered stretch occupies residues 81–110 (RDPIGYTKRNKKTLRHPMNELSGDESNSCT). The 240-residue stretch at 145 to 384 (PKRSLKQALC…SFAKELIFGD (240 aa)) folds into the NR LBD domain. The AF-2 stretch occupies residues 373–384 (FTSFAKELIFGD).

This sequence belongs to the nuclear hormone receptor family.

It localises to the nucleus. Its function is as follows. Probable transcription factor that acts in a feed-forward loop with nhr-10 to activate genes, including itself, involved in the vitamin B12-independent breakdown of the short-chain fatty acid propionate. This pathway is triggered in response to a diet low in vitamin B12, when canonical vitamin B12-dependent propionate breakdown cannot function; the resulting accumulation of propionate is probably sensed by nhr-68 and/or nhr-10. The protein is Nuclear hormone receptor family member nhr-68 of Caenorhabditis elegans.